The chain runs to 217 residues: Probable transaldolase (217 aa).

The active-site Schiff-base intermediate with substrate is Lys-83.

Belongs to the transaldolase family. Type 3B subfamily.

The protein localises to the cytoplasm. It catalyses the reaction D-sedoheptulose 7-phosphate + D-glyceraldehyde 3-phosphate = D-erythrose 4-phosphate + beta-D-fructose 6-phosphate. It functions in the pathway carbohydrate degradation; pentose phosphate pathway; D-glyceraldehyde 3-phosphate and beta-D-fructose 6-phosphate from D-ribose 5-phosphate and D-xylulose 5-phosphate (non-oxidative stage): step 2/3. In terms of biological role, transaldolase is important for the balance of metabolites in the pentose-phosphate pathway. This is Probable transaldolase from Ruegeria sp. (strain TM1040) (Silicibacter sp.).